The sequence spans 612 residues: UvrABC system protein C (612 aa).

The GIY-YIG domain occupies 20–98; sequence THSGVYRMLD…IKQHRPKYNI (79 aa). The UVR domain occupies 208–243; it reads STVLEEISAKMYQASEDMEYEKAQVYRDQLVVLRKL.

It belongs to the UvrC family. As to quaternary structure, interacts with UvrB in an incision complex.

The protein localises to the cytoplasm. In terms of biological role, the UvrABC repair system catalyzes the recognition and processing of DNA lesions. UvrC both incises the 5' and 3' sides of the lesion. The N-terminal half is responsible for the 3' incision and the C-terminal half is responsible for the 5' incision. The chain is UvrABC system protein C from Francisella tularensis subsp. novicida (strain U112).